Consider the following 562-residue polypeptide: Protein FAM83D-B (562 aa).

The disordered stretch occupies residues 424–472; sequence ITTQTTETSQCTTQTPAPTSSVARLSNSSNSSSSSFSSASTTSTGSNCS. Low complexity predominate over residues 425–472; sequence TTQTTETSQCTTQTPAPTSSVARLSNSSNSSSSSFSSASTTSTGSNCS.

Belongs to the FAM83 family.

The protein localises to the cytoplasm. It localises to the cytoskeleton. It is found in the spindle. Its subcellular location is the spindle pole. In terms of biological role, may regulate cell proliferation, growth, migration and epithelial to mesenchymal transition. May also be important for proper chromosome congression and alignment during mitosis. The sequence is that of Protein FAM83D-B from Xenopus laevis (African clawed frog).